The chain runs to 68 residues: Purkinje cell protein 4-like protein 1 (68 aa).

Residues 1 to 16 (MSELNTKTPPAANQAS) are compositionally biased toward polar residues. The segment at 1–42 (MSELNTKTPPAANQASDPEEKGKPGSIKKAEEEEEIDIDLTA) is disordered. The residue at position 8 (Thr8) is a Phosphothreonine. A compositionally biased stretch (basic and acidic residues) spans 18–31 (PEEKGKPGSIKKAE). One can recognise an IQ domain in the interval 45–68 (TEKAALAIQGKFRRFQKRKKDSSS).

Belongs to the PCP4 family. Expressed in laminar and nuclear structures of the CNS.

The protein is Purkinje cell protein 4-like protein 1 (Pcp4l1) of Mus musculus (Mouse).